The sequence spans 536 residues: MEIRQHEWLSASPHEGFEQMRLKSRPKEPSPSLTRVGANFYSSVKQQDYSASVWLRRKDKLEHSQQKCIVIFALVCCFAILVALIFSAVDIMGEDEDGLSEKNCQNKCRIALVENIPEGLNYSENAPFHLSLFQGWMNLLNMAKKSVDIVSSHWDLNHTHPSACQGQRLFEKLLQLTSQNIEIKLVSDVTADSKVLEALKLKGAEVTYMNMTAYNKGRLQSSFWIVDKQHVYIGSAGLDWQSLGQMKELGVIFYNCSCLVLDLQRIFALYSSLKFKSRVPQTWSKRLYGVYDNEKKLQLQLNETKSQAFVSNSPKLFCPKNRSFDIDAIYSVIDDAKQYVYIAVMDYLPISSTSTKRTYWPDLDAKIREALVLRSVRVRLLLSFWKETDPLTFNFISSLKAICTEIANCSLKVKFFDLERENACATKEQKNHTFPRLNRNKYMVTDGAAYIGNFDWVGNDFTQNAGTGLVINQADVRNNRSIIKQLKDVFERDWYSPYAKTLQPTKQPNCSSLFKLKPLSNKTATDDTGGKDPRNV.

A helical membrane pass occupies residues 69–89 (IVIFALVCCFAILVALIFSAV). An N-linked (GlcNAc...) asparagine glycan is attached at Asn-121. Residues 215–242 (NKGRLQSSFWIVDKQHVYIGSAGLDWQS) enclose the PLD phosphodiesterase 1 domain. The N-linked (GlcNAc...) asparagine glycan is linked to Asn-302. The region spanning 434 to 460 (FPRLNRNKYMVTDGAAYIGNFDWVGND) is the PLD phosphodiesterase 2 domain.

It belongs to the phospholipase D family.

It is found in the membrane. This Homo sapiens (Human) protein is Inactive phospholipase D5 (PLD5).